Consider the following 356-residue polypeptide: Heat-inducible transcription repressor HrcA (356 aa).

It belongs to the HrcA family.

Its function is as follows. Negative regulator of class I heat shock genes (grpE-dnaK-dnaJ and groELS operons). Prevents heat-shock induction of these operons. In Chelativorans sp. (strain BNC1), this protein is Heat-inducible transcription repressor HrcA.